The following is a 321-amino-acid chain: MARRPKGRFIDGIVLLDKSTGMSSNFALQRVKRFFNANKAGHTGALDPLATGMLPVCLGEGTKFSQHLLDADKRYLVTAKLGERTDTSDSDGEVVQTRAIDFTEAQLLTALDFFRGETQQVPSMYSALKYQGQPLYKYAREGIEVPRESRPITVFELNFIGLEGDELTLDIHCSKGTYIRTIIDDLGEMLGCGAHVIMLRRTQVAQYPYARMVSLEQLEALVAQAHEQQIDPSVLLDPLLLPMDTAVADFPEVNVPDAIAPYLMQGQAVRVPVNADLKTDELVRITLGDIRRFVGIGTMNEDGLLAPKRLIVIHDEPAETD.

D47 (nucleophile) is an active-site residue.

It belongs to the pseudouridine synthase TruB family. Type 1 subfamily.

The enzyme catalyses uridine(55) in tRNA = pseudouridine(55) in tRNA. Its function is as follows. Responsible for synthesis of pseudouridine from uracil-55 in the psi GC loop of transfer RNAs. This Shewanella baltica (strain OS185) protein is tRNA pseudouridine synthase B.